The primary structure comprises 157 residues: Transcription elongation factor GreA (157 aa).

Residues 13 to 75 adopt a coiled-coil conformation; that stretch reads RARLEAELEE…EIKSILARAQ (63 aa). The interval 113–142 is disordered; that stretch reads EAKPSEGKISNESPIGSALLGKRPRQKVTV.

This sequence belongs to the GreA/GreB family.

Functionally, necessary for efficient RNA polymerase transcription elongation past template-encoded arresting sites. The arresting sites in DNA have the property of trapping a certain fraction of elongating RNA polymerases that pass through, resulting in locked ternary complexes. Cleavage of the nascent transcript by cleavage factors such as GreA or GreB allows the resumption of elongation from the new 3'terminus. GreA releases sequences of 2 to 3 nucleotides. The chain is Transcription elongation factor GreA from Roseiflexus sp. (strain RS-1).